A 784-amino-acid polypeptide reads, in one-letter code: ent-copalyl diphosphate synthase 2, chloroplastic (784 aa).

Residues 1–57 (MSMTLFASVTRPGLPGPTALRFPETRHLFHSVTAFAASFSPSKSSVGSSQCNATTPP) constitute a chloroplast transit peptide. K242 contacts substrate. Residues D379 and D381 each coordinate Mg(2+). The short motif at 379-382 (DIDD) is the DXDD motif element. K466 contributes to the substrate binding site.

It belongs to the terpene synthase family. Requires Mg(2+) as cofactor. In terms of tissue distribution, present in both leaves and flowers.

It localises to the plastid. The protein resides in the chloroplast. Its pathway is plant hormone biosynthesis; gibberellin biosynthesis. It participates in secondary metabolite biosynthesis; terpenoid biosynthesis. In terms of biological role, involved in the biosynthesis of labdane-type diterpenoid including marrubiin and other labdane-related furanoid diterpenoids with potential applications as anti-diabetics, analgesics or vasorelaxants. May be involved in the conversion of geranylgeranyl diphosphate (GGPP) to ent-copalyl diphosphate (ent-CPP) and 8-hydroxycopalyl diphosphate (LPP, labda-13-en-8-ol diphosphate). In Marrubium vulgare (White horehound), this protein is ent-copalyl diphosphate synthase 2, chloroplastic.